A 63-amino-acid polypeptide reads, in one-letter code: Large ribosomal subunit protein bL32 (63 aa).

The interval 1–45 is disordered; sequence MAVQQNKKSRSRRDMRRSHDALTKPTLSVDPTTGETHLRHHMTPD. Residues 7–16 show a composition bias toward basic residues; sequence KKSRSRRDMR. The span at 25 to 35 shows a compositional bias: polar residues; that stretch reads PTLSVDPTTGE.

The protein belongs to the bacterial ribosomal protein bL32 family.

This Legionella pneumophila (strain Paris) protein is Large ribosomal subunit protein bL32.